We begin with the raw amino-acid sequence, 223 residues long: MKFFIDSADVEEIRKAHAMGCVDGVTTNPSLLAKVGRGLEETIREICSIVDGPISAECVSMEADELIKEGRSLAKIHDNVVVKIPMGVEGMKATKALTAEGIRTNVTLCFSANQALLCAKAGATYVSPFVGRLDDISQDGMELISHILEIYRNYEHFNTQVLVASVRNPVHVLQAARLGADVATLPYNVITQLANHPLTDAGIKKFLADWEKVPKAAKPPAAK.

K83 functions as the Schiff-base intermediate with substrate in the catalytic mechanism.

It belongs to the transaldolase family. Type 3B subfamily.

It is found in the cytoplasm. The enzyme catalyses D-sedoheptulose 7-phosphate + D-glyceraldehyde 3-phosphate = D-erythrose 4-phosphate + beta-D-fructose 6-phosphate. The protein operates within carbohydrate degradation; pentose phosphate pathway; D-glyceraldehyde 3-phosphate and beta-D-fructose 6-phosphate from D-ribose 5-phosphate and D-xylulose 5-phosphate (non-oxidative stage): step 2/3. Transaldolase is important for the balance of metabolites in the pentose-phosphate pathway. This chain is Probable transaldolase, found in Myxococcus xanthus (strain DK1622).